The primary structure comprises 410 residues: Peptidase T (410 aa).

Zn(2+) is bound at residue histidine 79. Residue aspartate 81 is part of the active site. Aspartate 142 provides a ligand contact to Zn(2+). The Proton acceptor role is filled by glutamate 176. Residues glutamate 177, aspartate 199, and histidine 381 each contribute to the Zn(2+) site.

It belongs to the peptidase M20B family. Zn(2+) serves as cofactor.

It is found in the cytoplasm. The enzyme catalyses Release of the N-terminal residue from a tripeptide.. Cleaves the N-terminal amino acid of tripeptides. The polypeptide is Peptidase T (Bacillus velezensis (strain DSM 23117 / BGSC 10A6 / LMG 26770 / FZB42) (Bacillus amyloliquefaciens subsp. plantarum)).